We begin with the raw amino-acid sequence, 803 residues long: Translation initiation factor IF-2 (803 aa).

Disordered stretches follow at residues P95 to E125 and E138 to E178. Over residues V111 to N121 the composition is skewed to polar residues. The segment covering E138–K155 has biased composition (basic and acidic residues). Over residues K156–K167 the composition is skewed to basic residues. Residues P168 to E178 are compositionally biased toward basic and acidic residues. The 170-residue stretch at P302 to K471 folds into the tr-type G domain. Residues G311–T318 are G1. G311 to T318 contacts GTP. A G2 region spans residues G336–H340. Residues D357 to G360 are G3. GTP-binding positions include D357–H361 and N411–D414. The tract at residues N411–D414 is G4. A G5 region spans residues S447–K449.

Belongs to the TRAFAC class translation factor GTPase superfamily. Classic translation factor GTPase family. IF-2 subfamily.

The protein localises to the cytoplasm. Its function is as follows. One of the essential components for the initiation of protein synthesis. Protects formylmethionyl-tRNA from spontaneous hydrolysis and promotes its binding to the 30S ribosomal subunits. Also involved in the hydrolysis of GTP during the formation of the 70S ribosomal complex. In Coxiella burnetii (strain CbuK_Q154) (Coxiella burnetii (strain Q154)), this protein is Translation initiation factor IF-2.